A 1509-amino-acid polypeptide reads, in one-letter code: DNA-directed RNA polymerase subunit beta' (1509 aa).

Residues C75, C77, C90, and C93 each coordinate Zn(2+). 3 residues coordinate Mg(2+): D474, D476, and D478. 4 residues coordinate Zn(2+): C804, C878, C885, and C888.

The protein belongs to the RNA polymerase beta' chain family. As to quaternary structure, the RNAP catalytic core consists of 2 alpha, 1 beta, 1 beta' and 1 omega subunit. When a sigma factor is associated with the core the holoenzyme is formed, which can initiate transcription. It depends on Mg(2+) as a cofactor. Zn(2+) is required as a cofactor.

It catalyses the reaction RNA(n) + a ribonucleoside 5'-triphosphate = RNA(n+1) + diphosphate. In terms of biological role, DNA-dependent RNA polymerase catalyzes the transcription of DNA into RNA using the four ribonucleoside triphosphates as substrates. This is DNA-directed RNA polymerase subunit beta' from Sulfurovum sp. (strain NBC37-1).